We begin with the raw amino-acid sequence, 437 residues long: Nickel-cobalt-cadmium resistance protein NccC (437 aa).

Residues 1–48 (MGAVLKAEANIFRSHPFRPMNQATPKKLRSAPCIGVALLLMATGSIQA) form the signal peptide.

The protein belongs to the outer membrane factor (OMF) (TC 1.B.17) family.

Its function is as follows. Component of the NCC cation-efflux system that confers resistance to nickel, cobalt and cadmium. The sequence is that of Nickel-cobalt-cadmium resistance protein NccC (nccC) from Alcaligenes xylosoxydans xylosoxydans (Achromobacter xylosoxidans).